We begin with the raw amino-acid sequence, 525 residues long: M-phase inducer phosphatase 1 (525 aa).

The Phosphodegron motif lies at 73-83 (MGSSESTDSGF). Residue Ser75 is modified to Phosphoserine; by CHEK1. 3 positions are modified to phosphoserine; by NEK11: Ser78, Ser81, and Ser87. Ser106 carries the post-translational modification Phosphoserine. Ser123 is modified (phosphoserine; by CHEK1 and CHEK2). The KEN box signature appears at 140-142 (KEN). A Phosphoserine; by CHEK1 modification is found at Ser177. Disordered regions lie at residues 179 to 204 (PARM…PQSP) and 262 to 308 (SASC…PEKP). Residues Ser279 and Ser293 each carry the phosphoserine; by CHEK1 and CHEK2 modification. Residues 294–306 (VAGASPEEAASPE) are compositionally biased toward low complexity. Ser322 carries the post-translational modification Phosphoserine. Residues 377–483 (LIKEFVIIDC…FFLKCQSHCE (107 aa)) form the Rhodanese domain. Residue Cys432 is part of the active site. A Phosphothreonine; by CHEK1 modification is found at Thr508. Phosphoserine; by PLK3 is present on residues Ser514 and Ser520.

This sequence belongs to the MPI phosphatase family. In terms of assembly, interacts with CCNB1/cyclin B1. Interacts with YWHAE/14-3-3 epsilon when phosphorylated. Interacts with CUL1 specifically when CUL1 is neddylated and active. Interacts with BTRC/BTRCP1 and FBXW11/BTRCP2. Interactions with CUL1, BTRC and FBXW11 are enhanced upon DNA damage. Interacts with HSP90AB1; prevents heat shock-mediated CDC25A degradation and contributes to cell cycle progression. Phosphorylated by CHEK1 on Ser-75, Ser-123, Ser-177, Ser-279, Ser-293 and Thr-508 during checkpoint mediated cell cycle arrest. Also phosphorylated by CHEK2 on Ser-123, Ser-279, and Ser-293 during checkpoint mediated cell cycle arrest. Phosphorylation on Ser-177 and Thr-508 creates binding sites for YWHAE/14-3-3 epsilon which inhibits CDC25A. Phosphorylation on Ser-75, Ser-123, Ser-177, Ser-279 and Ser-293 may also promote ubiquitin-dependent proteolysis of CDC25A by the SCF complex. Phosphorylation of CDC25A at Ser-75 by CHEK1 primes it for subsequent phosphorylation at Ser-78, Ser-81 and Ser-87 by NEK11. Phosphorylation by NEK11 is required for BTRC-mediated polyubiquitination and degradation. Phosphorylation by PIM1 leads to an increase in phosphatase activity. Phosphorylated by PLK3 following DNA damage, leading to promote its ubiquitination and degradation. Post-translationally, ubiquitinated by the anaphase promoting complex/cyclosome (APC/C) ubiquitin ligase complex that contains FZR1/CDH1 during G1 phase leading to its degradation by the proteasome. Ubiquitinated by a SCF complex containing BTRC and FBXW11 during S phase leading to its degradation by the proteasome. Deubiquitination by USP17L2/DUB3 leads to its stabilization.

It catalyses the reaction O-phospho-L-tyrosyl-[protein] + H2O = L-tyrosyl-[protein] + phosphate. With respect to regulation, stimulated by B-type cyclins. Stimulated by PIM1-mediated phosphorylation. In terms of biological role, tyrosine protein phosphatase which functions as a dosage-dependent inducer of mitotic progression. Directly dephosphorylates CDK1 and stimulates its kinase activity. Also dephosphorylates CDK2 in complex with cyclin-E, in vitro. The protein is M-phase inducer phosphatase 1 (CDC25A) of Bos taurus (Bovine).